A 22-amino-acid polypeptide reads, in one-letter code: Defensin D1 (22 aa).

It belongs to the DEFL family. Group II subfamily.

In terms of biological role, antimicrobial peptide. Active against Gram-positive and Gram-negative bacterial pathogens. This chain is Defensin D1, found in Spinacia oleracea (Spinach).